A 732-amino-acid polypeptide reads, in one-letter code: E3 ubiquitin-protein ligase TRIM56 (732 aa).

An RING-type zinc finger spans residues 21–60 (CKICLEQLRVPKTLPCLHTYCQDCLAQLAEGSRLRCPECR). The B box-type zinc finger occupies 164–205 (RQAAQCPQHPGEALRFLCQPCSQLLCRECRLDPHLDHPCLPL). 4 residues coordinate Zn(2+): cysteine 169, histidine 172, cysteine 192, and histidine 197. A coiled-coil region spans residues 211–286 (ARRPGLEELL…LRAHVEAAEE (76 aa)). Positions 374–384 (LPQKDSGKDGA) are enriched in basic and acidic residues. A disordered region spans residues 374-462 (LPQKDSGKDG…PAPGPNLEGS (89 aa)). The segment covering 389 to 405 (GDATQPQSRDGVQTPNQ) has biased composition (polar residues). Threonine 402 is modified (phosphothreonine). The span at 407-416 (DGAKTPKESR) shows a compositional bias: basic and acidic residues. Threonine 419 is subject to Phosphothreonine. Over residues 434–446 (SNKKRKFKGRLKS) the composition is skewed to basic residues. A Phosphoserine modification is found at serine 452.

The protein belongs to the TRIM/RBCC family. In terms of assembly, interacts with STING1. Interacts with TICAM1.

It localises to the cytoplasm. The enzyme catalyses S-ubiquitinyl-[E2 ubiquitin-conjugating enzyme]-L-cysteine + [acceptor protein]-L-lysine = [E2 ubiquitin-conjugating enzyme]-L-cysteine + N(6)-ubiquitinyl-[acceptor protein]-L-lysine.. It functions in the pathway protein modification; protein ubiquitination. Functionally, E3 ubiquitin-protein ligase that plays a key role in innate antiviral immunity by mediating ubiquitination of CGAS and STING1. In response to pathogen- and host-derived double-stranded DNA (dsDNA), targets STING1 to 'Lys-63'-linked ubiquitination, thereby promoting its homodimerization, a step required for the production of type I interferon IFN-beta. Also mediate monoubiquitination of CGAS, thereby promoting CGAS oligomerization and subsequent activation. Independently of its E3 ubiquitin ligase activity, positive regulator of TLR3 signaling. Potentiates extracellular double stranded RNA (dsRNA)-induced expression of IFNB1 and interferon-stimulated genes ISG15, IFIT1/ISG56, CXCL10, OASL and CCL5/RANTES. Restricts bovine viral diarrhea virus (BVDV) replication. The protein is E3 ubiquitin-protein ligase TRIM56 of Bos taurus (Bovine).